A 345-amino-acid polypeptide reads, in one-letter code: Protein-glutamate methylesterase/protein-glutamine glutaminase 2 (345 aa).

In terms of domain architecture, Response regulatory spans Met1–Asp116. Asp50 is subject to 4-aspartylphosphate. The region spanning Leu154 to Gly345 is the CheB-type methylesterase domain. Residues Ser166, His192, and Asp288 contribute to the active site.

It belongs to the CheB family. In terms of processing, phosphorylated by CheA. Phosphorylation of the N-terminal regulatory domain activates the methylesterase activity.

It is found in the cytoplasm. The catalysed reaction is [protein]-L-glutamate 5-O-methyl ester + H2O = L-glutamyl-[protein] + methanol + H(+). The enzyme catalyses L-glutaminyl-[protein] + H2O = L-glutamyl-[protein] + NH4(+). Its function is as follows. Involved in chemotaxis. Part of a chemotaxis signal transduction system that modulates chemotaxis in response to various stimuli. Catalyzes the demethylation of specific methylglutamate residues introduced into the chemoreceptors (methyl-accepting chemotaxis proteins or MCP) by CheR. Also mediates the irreversible deamidation of specific glutamine residues to glutamic acid. The sequence is that of Protein-glutamate methylesterase/protein-glutamine glutaminase 2 from Albidiferax ferrireducens (strain ATCC BAA-621 / DSM 15236 / T118) (Rhodoferax ferrireducens).